The primary structure comprises 304 residues: MCGPDDRCPARWPGPGRAVKCGKGLAAARPGRVERGGAQRGGAGLELHPLLGGRTWRAARDADGCEALGTVAVPFDDDDKIVGGYTCEENSLPYQVSLNSGSHFCGGSLISEQWVVSAAHCYKTRIQVRLGEHNIKVLEGNEQFINAAKIIRHPKYNRDTLDNDIMLIKLSSPAVINARVSTISLPTTPPAAGTECLISGWGNTLSFGADYPDELKCLDAPVLTQAECKASYPGKITNSMFCVGFLEGGKDSCQRDSGGPVVCNGQLQGVVSWGHGCAWKNRPGVYTKVYNYVDWIKDTIAANS.

One can recognise a Peptidase S1 domain in the interval 81–301; sequence IVGGYTCEEN…YVDWIKDTIA (221 aa). Cystine bridges form between Cys-87–Cys-217, Cys-105–Cys-121, Cys-196–Cys-263, Cys-228–Cys-242, and Cys-253–Cys-277. His-120 (charge relay system) is an active-site residue. The Ca(2+) site is built by Glu-132, Asn-134, Val-137, Glu-139, and Glu-142. Asp-164 functions as the Charge relay system in the catalytic mechanism. A Sulfotyrosine modification is found at Tyr-211. The active-site Charge relay system is Ser-257.

The protein belongs to the peptidase S1 family. It depends on Ca(2+) as a cofactor. In terms of tissue distribution, detected in pancreas and pancreatic fluid (at protein level). Expressed in pancreas and brain. Detected in ileum.

The protein resides in the secreted. It catalyses the reaction Preferential cleavage: Arg-|-Xaa, Lys-|-Xaa.. Its activity is regulated as follows. Not inhibited by Kunitz-type trypsin inhibitors. Functionally, digestive protease that cleaves proteins preferentially after an Arg residue and has proteolytic activity toward Kunitz-type trypsin inhibitors. This chain is Trypsin-3 (PRSS3), found in Homo sapiens (Human).